Reading from the N-terminus, the 748-residue chain is MASSRCPAPRGCRCLPGASLAWLGTVLLFLADWVLLRTALPRIFSLLVPTALPLLRVWAVGLSRWAVLWLGACGVLRATVGSKSENAGAQGWLAALEPLAAALGLALPGLALFRELISWGAPGSADSTRLLHWGSHPSAFVVSYAAALPAAALWHKLGSLWVPGGQGGSGNPVRRLLGCLGSETRRLSLFLVLVVLSSLGEMAIPFFTGRLTDWILQDGSADTFTRNLTLMSILTIASAVLEFVGDGIYNNTMGHVHSHLQGEVFGAVLRQETEFFQQNQTGNITSRVTEDTSTLSDSLSENLSLFLWYLVRGLCLLGIMLWGSVSLTMVTLVTLPLLFLLPKKVGKWYQLLEVQVRESLAKSSQVAIEALSAMPTVRSFANEEGEAQKFREKLQEIKTLNQKEAVAYAVNSWTTSISGMLLKVGILYIGGQLVTSGAVSSGNLVTFVLYQMQFTQAVEVLLSIYPRVQKAVGSSEKIFEYLDRTPRCPPSGLLTPLHLEGLVQFQDVSFAYPNRPDVLVLQGLTFTLHPGEVTALVGPNGSGKSTVAALLQNLYQPTGGQLLLDGKPLPQYEHRYLHRQVAAVGQEPQVFGRSLQENIAYGLTQKPTMEEITAAAVKCGAHSFISGLPQGYDTEVGEAGSQLSGGQRQAVALARALIRKPCVLILDDATSALDANSQLQVEQLLYESPERYSRSVLLITQHLSLVEQADHILFLEGGAIREGGTHQQLMEKKGCYWAMVQAPADAPE.

Topologically, residues 1 to 15 (MASSRCPAPRGCRCL) are cytoplasmic. A helical membrane pass occupies residues 16–36 (PGASLAWLGTVLLFLADWVLL). Over 37–53 (RTALPRIFSLLVPTALP) the chain is Lumenal. The chain crosses the membrane as a helical span at residues 54-76 (LLRVWAVGLSRWAVLWLGACGVL). Residues 77-92 (RATVGSKSENAGAQGW) lie on the Cytoplasmic side of the membrane. The chain crosses the membrane as a helical span at residues 93 to 113 (LAALEPLAAALGLALPGLALF). The Lumenal portion of the chain corresponds to 114-133 (RELISWGAPGSADSTRLLHW). A helical transmembrane segment spans residues 134-154 (GSHPSAFVVSYAAALPAAALW). Residues 155 to 186 (HKLGSLWVPGGQGGSGNPVRRLLGCLGSETRR) lie on the Cytoplasmic side of the membrane. Residues 187–207 (LSLFLVLVVLSSLGEMAIPFF) traverse the membrane as a helical segment. The 284-residue stretch at 187–470 (LSLFLVLVVL…LLSIYPRVQK (284 aa)) folds into the ABC transmembrane type-1 domain. Over 208–227 (TGRLTDWILQDGSADTFTRN) the chain is Lumenal. Residues 228-248 (LTLMSILTIASAVLEFVGDGI) form a helical membrane-spanning segment. At 249–298 (YNNTMGHVHSHLQGEVFGAVLRQETEFFQQNQTGNITSRVTEDTSTLSDS) the chain is on the cytoplasmic side. The chain crosses the membrane as a helical span at residues 299–319 (LSENLSLFLWYLVRGLCLLGI). The Lumenal portion of the chain corresponds to 320 to 328 (MLWGSVSLT). The helical transmembrane segment at 329–349 (MVTLVTLPLLFLLPKKVGKWY) threads the bilayer. Residues 350–418 (QLLEVQVRES…AVNSWTTSIS (69 aa)) are Cytoplasmic-facing. Positions 375-420 (PTVRSFANEEGEAQKFREKLQEIKTLNQKEAVAYAVNSWTTSISGM) are part of the peptide-binding site. Residues 419–439 (GMLLKVGILYIGGQLVTSGAV) traverse the membrane as a helical segment. Residues 440 to 443 (SSGN) lie on the Lumenal side of the membrane. The chain crosses the membrane as a helical span at residues 444-464 (LVTFVLYQMQFTQAVEVLLSI). A part of the peptide-binding site region spans residues 453–487 (QFTQAVEVLLSIYPRVQKAVGSSEKIFEYLDRTPR). At 465–748 (YPRVQKAVGS…MVQAPADAPE (284 aa)) the chain is on the cytoplasmic side. The region spanning 503-742 (VQFQDVSFAY…KGCYWAMVQA (240 aa)) is the ABC transporter domain. Residues 538–546 (GPNGSGKST), 641–647 (SQLSGGQ), and Q701 each bind ATP. S545 provides a ligand contact to Mg(2+).

It belongs to the ABC transporter superfamily. ABCB family. MHC peptide exporter (TC 3.A.1.209) subfamily. In terms of assembly, heterodimer of TAP1 and TAP2 (TAP1-TAP2). A component of the peptide loading complex (PLC), interacts via TAPBP with MHCI heterodimer; this interaction mediates peptide-MHCI assembly. Interacts with PSMB5 and PSMB8. Mg(2+) is required as a cofactor.

The protein localises to the endoplasmic reticulum membrane. It catalyses the reaction a peptide antigen(in) + ATP + H2O = a peptide antigen(out) + ADP + phosphate + H(+). Its function is as follows. ABC transporter associated with antigen processing. In complex with TAP2 mediates unidirectional translocation of peptide antigens from cytosol to endoplasmic reticulum (ER) for loading onto MHC class I (MHCI) molecules. Uses the chemical energy of ATP to export peptides against the concentration gradient. During the transport cycle alternates between 'inward-facing' state with peptide binding site facing the cytosol to 'outward-facing' state with peptide binding site facing the ER lumen. Peptide antigen binding to ATP-loaded TAP1-TAP2 induces a switch to hydrolysis-competent 'outward-facing' conformation ready for peptide loading onto nascent MHCI molecules. Subsequently ATP hydrolysis resets the transporter to the 'inward facing' state for a new cycle. As a component of the peptide loading complex (PLC), acts as a molecular scaffold essential for peptide-MHCI assembly and antigen presentation. The chain is Antigen peptide transporter 1 (TAP1) from Gorilla gorilla gorilla (Western lowland gorilla).